The following is a 310-amino-acid chain: p-hydroxybenzoic acid efflux pump subunit AaeA (310 aa).

The helical transmembrane segment at 12–32 (AITVVLVVLAFIAIFRAWSFY) threads the bilayer.

It belongs to the membrane fusion protein (MFP) (TC 8.A.1) family.

The protein localises to the cell inner membrane. In terms of biological role, forms an efflux pump with AaeB. The sequence is that of p-hydroxybenzoic acid efflux pump subunit AaeA from Cronobacter sakazakii (strain ATCC BAA-894) (Enterobacter sakazakii).